A 316-amino-acid polypeptide reads, in one-letter code: ATP synthase gamma chain (316 aa).

This sequence belongs to the ATPase gamma chain family. F-type ATPases have 2 components, CF(1) - the catalytic core - and CF(0) - the membrane proton channel. CF(1) has five subunits: alpha(3), beta(3), gamma(1), delta(1), epsilon(1). CF(0) has three main subunits: a, b and c.

It is found in the cellular thylakoid membrane. Functionally, produces ATP from ADP in the presence of a proton gradient across the membrane. The gamma chain is believed to be important in regulating ATPase activity and the flow of protons through the CF(0) complex. The protein is ATP synthase gamma chain of Synechococcus elongatus (strain ATCC 33912 / PCC 7942 / FACHB-805) (Anacystis nidulans R2).